Here is a 563-residue protein sequence, read N- to C-terminus: Nicalin (563 aa).

Residues 1-29 (MQDEIIDFFRSPALLFYMTLMLTICVVNG) form the signal peptide. The Lumenal segment spans residues 30–522 (SQQVGEVVET…NRLVAERVKP (493 aa)). An N-linked (GlcNAc...) asparagine glycan is attached at Asn-232. The chain crosses the membrane as a helical span at residues 523–543 (AVFELVIAAGVFTYLSAFYYI). Residues 544-563 (ATHSQNTIEGTVAAIRKSIF) are Cytoplasmic-facing.

Belongs to the nicastrin family. As to quaternary structure, may interact with the levamisole-sensitive nicotinic acetylcholine receptor (L-AChR). May interact with nra-4 in the ER. As to expression, expressed in body wall, pharyngeal, and vulval muscles, excretory canal cell, head and motor neurons, and vulval epithelium.

Its subcellular location is the endoplasmic reticulum membrane. Functionally, involved in the recognition and selection of protein complexes to exit the endoplasmic reticulum (ER). In muscles, regulates levamisole-sensitive nicotinic acetylcholine receptor (L-AChR) subunit composition, possibly by allowing only specific L-AChR subunit combinations to exit the ER. Specifically, may promote the inclusion of alpha subunits unc-38 and unc-29 into L-AChR. Regulates L-AChR sensitivity to agonists such as nicotine and levamisole at neuro-muscular junctions. In touch neurons, may prevent ER exit of incorrectly folded mec-4-mec-10 ion channel. The chain is Nicalin from Caenorhabditis elegans.